The sequence spans 236 residues: Aminopyrimidine aminohydrolase (236 aa).

Asp-44 is a substrate binding site. The active-site Nucleophile is Cys-135. Substrate contacts are provided by Tyr-139 and Tyr-163. Glu-205 serves as the catalytic Proton donor.

Belongs to the TenA family. As to quaternary structure, homotetramer.

The enzyme catalyses 4-amino-5-aminomethyl-2-methylpyrimidine + H2O = 4-amino-5-hydroxymethyl-2-methylpyrimidine + NH4(+). It carries out the reaction thiamine + H2O = 5-(2-hydroxyethyl)-4-methylthiazole + 4-amino-5-hydroxymethyl-2-methylpyrimidine + H(+). It functions in the pathway cofactor biosynthesis; thiamine diphosphate biosynthesis. Its function is as follows. Catalyzes an amino-pyrimidine hydrolysis reaction at the C5' of the pyrimidine moiety of thiamine compounds, a reaction that is part of a thiamine salvage pathway. Thus, catalyzes the conversion of 4-amino-5-aminomethyl-2-methylpyrimidine to 4-amino-5-hydroxymethyl-2-methylpyrimidine (HMP). To a lesser extent, is also able to catalyze the hydrolytic cleavage of thiamine; however, this thiaminase activity is unlikely to be physiologically relevant. Therefore, is involved in the regeneration of the thiamine pyrimidine from thiamine degraded products present in the environment, rather than in thiamine degradation. The sequence is that of Aminopyrimidine aminohydrolase from Bacillus subtilis (strain 168).